A 469-amino-acid polypeptide reads, in one-letter code: Protein C-ets-2 (469 aa).

The PNT domain maps to 85 to 170 (ATFSGFKKEQ…EHLEQMIKEN (86 aa)). Residues serine 220 and serine 225 each carry the phosphoserine modification. Positions 264–289 (NLLTNNSGTPKDHDSPENGADSFESS) are disordered. 3 positions are modified to phosphoserine: serine 295, serine 298, and serine 301. The ETS DNA-binding region spans 363–443 (IQLWQFLLEL…SGKRYVYRFV (81 aa)).

It belongs to the ETS family. Post-translationally, phosphorylation by CDK10 at Ser-220 and Ser-225 creates a phosphodegron that targets ETS2 for proteasomal degradation.

It localises to the nucleus. Transcription factor activating transcription. Binds specifically the DNA GGAA/T core motif (Ets-binding site or EBS) in gene promoters and stimulates transcription. This Homo sapiens (Human) protein is Protein C-ets-2 (ETS2).